The chain runs to 923 residues: Alanine--tRNA ligase (923 aa).

Zn(2+) is bound by residues H611, H615, C714, and H718. Gly residues predominate over residues 886–903; sequence VGGGGGGRPNMARGGGTD. The tract at residues 886–909 is disordered; sequence VGGGGGGRPNMARGGGTDPSGMDN.

It belongs to the class-II aminoacyl-tRNA synthetase family. Zn(2+) serves as cofactor.

It is found in the cytoplasm. The catalysed reaction is tRNA(Ala) + L-alanine + ATP = L-alanyl-tRNA(Ala) + AMP + diphosphate. Catalyzes the attachment of alanine to tRNA(Ala) in a two-step reaction: alanine is first activated by ATP to form Ala-AMP and then transferred to the acceptor end of tRNA(Ala). Also edits incorrectly charged Ser-tRNA(Ala) and Gly-tRNA(Ala) via its editing domain. This chain is Alanine--tRNA ligase, found in Methanococcoides burtonii (strain DSM 6242 / NBRC 107633 / OCM 468 / ACE-M).